The primary structure comprises 319 residues: Phosphate acyltransferase (319 aa).

This sequence belongs to the PlsX family. Homodimer. Probably interacts with PlsY.

It localises to the cytoplasm. The catalysed reaction is a fatty acyl-[ACP] + phosphate = an acyl phosphate + holo-[ACP]. It participates in lipid metabolism; phospholipid metabolism. Catalyzes the reversible formation of acyl-phosphate (acyl-PO(4)) from acyl-[acyl-carrier-protein] (acyl-ACP). This enzyme utilizes acyl-ACP as fatty acyl donor, but not acyl-CoA. The sequence is that of Phosphate acyltransferase from Chlamydia muridarum (strain MoPn / Nigg).